The following is a 264-amino-acid chain: Phosphate import ATP-binding protein PstB 1 (264 aa).

Positions 20-259 (LETRDLNIFY…PKIKLTEDYI (240 aa)) constitute an ABC transporter domain. 52–59 (GASGSGKS) is an ATP binding site.

This sequence belongs to the ABC transporter superfamily. Phosphate importer (TC 3.A.1.7) family. As to quaternary structure, the complex is composed of two ATP-binding proteins (PstB), two transmembrane proteins (PstC and PstA) and a solute-binding protein (PstS).

It is found in the cell membrane. The enzyme catalyses phosphate(out) + ATP + H2O = ADP + 2 phosphate(in) + H(+). Functionally, part of the ABC transporter complex PstSACB involved in phosphate import. Responsible for energy coupling to the transport system. The chain is Phosphate import ATP-binding protein PstB 1 from Ligilactobacillus salivarius (strain UCC118) (Lactobacillus salivarius).